Consider the following 339-residue polypeptide: MRILGIETSCDETGIAIYDDEKGLLAHKLYSQIKLHADYGGVVPELASRDHVKKTIPLIKEALKEANLTAKDIDGVAYTAGPGLVGALLVGATIGRSLAYAWGVPAVPVHHMEGHLLAPMLEDNPPPFPFVAVLVSGGHSMMVEVKGIGEYKILGESIDDAAGEAFDKTAKLMGLDYPGGPLLSKLAEKGTPGRFKFPRPMTNVPGLDMSFSGLKTFTANTIAANGDDEQTRADIAYAFEEAVCATLAIKCKRALEQTGMKRIVIAGGVSANRRLRAELEKLAHKVGGDVYYPRTEFCTDNGAMIAYAGMQRLKNNEVSDLAVEARPRWPIDQLTPVMK.

2 residues coordinate Fe cation: His-111 and His-115. Residues 134-138 (LVSGG), Asp-167, Gly-180, and Asn-272 each bind substrate. Asp-300 provides a ligand contact to Fe cation.

This sequence belongs to the KAE1 / TsaD family. Fe(2+) is required as a cofactor.

It is found in the cytoplasm. The catalysed reaction is L-threonylcarbamoyladenylate + adenosine(37) in tRNA = N(6)-L-threonylcarbamoyladenosine(37) in tRNA + AMP + H(+). In terms of biological role, required for the formation of a threonylcarbamoyl group on adenosine at position 37 (t(6)A37) in tRNAs that read codons beginning with adenine. Is involved in the transfer of the threonylcarbamoyl moiety of threonylcarbamoyl-AMP (TC-AMP) to the N6 group of A37, together with TsaE and TsaB. TsaD likely plays a direct catalytic role in this reaction. This chain is tRNA N6-adenosine threonylcarbamoyltransferase, found in Vibrio vulnificus (strain YJ016).